The sequence spans 389 residues: Phospho-N-acetylmuramoyl-pentapeptide-transferase (389 aa).

10 helical membrane passes run 25–45 (RAVAATITALLIGLVCGPWVI), 73–93 (TMGGVLILIGIAVSTLLWADL), 97–117 (FIWIVMLVTFGFGVIGWVDDY), 135–155 (FWQSLIGLFAAVYLAFSVSEA), 189–209 (SMTYPLGVWGFIALTYLVIVG), 222–242 (GLVIMPVVLVGSSLGVFAYVM), 259–279 (AGEMLIFCSAMGGAGLAFLWF), 286–306 (VFMGDVGALALGGALGTIAVI), 311–331 (IVLFIMGGIFVAETVSVMLQV), and 366–386 (QVVVRFWIITLMLCLFGLSTL).

Belongs to the glycosyltransferase 4 family. MraY subfamily. Mg(2+) is required as a cofactor.

The protein localises to the cell inner membrane. It carries out the reaction UDP-N-acetyl-alpha-D-muramoyl-L-alanyl-gamma-D-glutamyl-meso-2,6-diaminopimeloyl-D-alanyl-D-alanine + di-trans,octa-cis-undecaprenyl phosphate = di-trans,octa-cis-undecaprenyl diphospho-N-acetyl-alpha-D-muramoyl-L-alanyl-D-glutamyl-meso-2,6-diaminopimeloyl-D-alanyl-D-alanine + UMP. The protein operates within cell wall biogenesis; peptidoglycan biosynthesis. Its function is as follows. Catalyzes the initial step of the lipid cycle reactions in the biosynthesis of the cell wall peptidoglycan: transfers peptidoglycan precursor phospho-MurNAc-pentapeptide from UDP-MurNAc-pentapeptide onto the lipid carrier undecaprenyl phosphate, yielding undecaprenyl-pyrophosphoryl-MurNAc-pentapeptide, known as lipid I. The sequence is that of Phospho-N-acetylmuramoyl-pentapeptide-transferase from Paraburkholderia phymatum (strain DSM 17167 / CIP 108236 / LMG 21445 / STM815) (Burkholderia phymatum).